A 102-amino-acid chain; its full sequence is Small ribosomal subunit protein uS10 (102 aa).

Belongs to the universal ribosomal protein uS10 family. In terms of assembly, part of the 30S ribosomal subunit.

In terms of biological role, involved in the binding of tRNA to the ribosomes. The protein is Small ribosomal subunit protein uS10 of Hyperthermus butylicus (strain DSM 5456 / JCM 9403 / PLM1-5).